A 304-amino-acid polypeptide reads, in one-letter code: MRIGVIMGGVSSEKQVSIMTGNEMIANLDKNKYEIVPITLNEKMDLIEKAKDIDFALLALHGKYGEDGTVQGTLESLGIPYSGSNMLSSGICMDKNISKKILRYEGIETPDWIELTKMEDLNFDELDKLGFPLVVKPNSGGSSVGVKIVYDKDELISMLETVFEWDSEVVIEKYIKGEEITCSIFDGKQLPIISIRHAAEFFDYNAKYDDASTIEEVIELPAELKERVNKASLACYKALKCSVYARVDMMVKDGIPYVMEVNTLPGMTQASLLPKSADAAGIHYSKLLDMIIETSLRVRKEEGF.

Residues 99–293 form the ATP-grasp domain; that stretch reads KKILRYEGIE…YSKLLDMIIE (195 aa). Residue 126-181 participates in ATP binding; it reads LDKLGFPLVVKPNSGGSSVGVKIVYDKDELISMLETVFEWDSEVVIEKYIKGEEIT. Residues aspartate 248, glutamate 260, and asparagine 262 each contribute to the Mg(2+) site.

Belongs to the D-alanine--D-alanine ligase family. Mg(2+) is required as a cofactor. Requires Mn(2+) as cofactor.

It localises to the cytoplasm. The catalysed reaction is 2 D-alanine + ATP = D-alanyl-D-alanine + ADP + phosphate + H(+). Its pathway is cell wall biogenesis; peptidoglycan biosynthesis. Cell wall formation. This chain is D-alanine--D-alanine ligase, found in Bacillus anthracis (strain A0248).